Consider the following 131-residue polypeptide: MSWQTYVDEHLMCEIEGHHLASAAILGHDGTVWAQSADFPQFKPEEITGIMKDFDEPGHLAPTGMFVAAAKYMVIQGEPGAVIRGKKGAGGITIKKTGQALVVGIYDEPMTPGQCNMVVERLGDYLLKQGL.

A disulfide bond links C13 and C115. The Involved in PIP2 interaction signature appears at 81–97 (AVIRGKKGAGGITIKKT). Position 111 is a phosphothreonine (T111).

The protein belongs to the profilin family. Occurs in many kinds of cells as a complex with monomeric actin in a 1:1 ratio. Phosphorylated by MAP kinases.

It is found in the cytoplasm. It localises to the cytoskeleton. Its function is as follows. Binds to actin and affects the structure of the cytoskeleton. At high concentrations, profilin prevents the polymerization of actin, whereas it enhances it at low concentrations. The protein is Profilin-6 of Phleum pratense (Common timothy).